Consider the following 314-residue polypeptide: MPLEQRSQHCKPEEGLEARGEALGLVGAQAPATEEQEAASSSSTLVEVTLGEVPAAESPDPPQSPQGASSLPTTMNYPLWSQSYEDSSNQEEEGPSTFPDLESEFQAALSRKVAELVHFLLLKYRAREPVTKAEMLGSVVGNWQYFFPVIFSKASSSLQLVFGIELMEVDPIGHLYIFATCLGLSYDGLLGDNQIMPKAGLLIIVLAIIAREGDCAPEEKIWEELSVLEVFEGREDSILGDPKKLLTQHFVQENYLEYRQVPGSDPACYEFLWGPRALVETSYVKVLHHMVKISGGPHISYPPLHEWVLREGEE.

Basic and acidic residues predominate over residues 1–20 (MPLEQRSQHCKPEEGLEARG). The tract at residues 1 to 99 (MPLEQRSQHC…QEEEGPSTFP (99 aa)) is disordered. Residues 21 to 44 (EALGLVGAQAPATEEQEAASSSST) show a composition bias toward low complexity. Over residues 65–87 (PQGASSLPTTMNYPLWSQSYEDS) the composition is skewed to polar residues. Positions 109–308 (LSRKVAELVH…ISYPPLHEWV (200 aa)) constitute an MAGE domain.

Interacts with TRIM28. Post-translationally, ubiquitinated by the DCX(DCAF12) complex specifically recognizes the diglutamate (Glu-Glu) at the C-terminus, leading to its degradation. In terms of tissue distribution, expressed in many tumors of several types, such as melanoma, head and neck squamous cell carcinoma, lung carcinoma and breast carcinoma, but not in normal tissues except for testes and placenta. Never expressed in kidney tumors, Leukemias and lymphomas.

In terms of biological role, activator of ubiquitin ligase activity of RING-type zinc finger-containing E3 ubiquitin-protein ligases that acts as a repressor of autophagy. May enhance ubiquitin ligase activity of TRIM28 and stimulate p53/TP53 ubiquitination by TRIM28. Proposed to act through recruitment and/or stabilization of the Ubl-conjugating enzyme (E2) at the E3:substrate complex. May play a role in embryonal development and tumor transformation or aspects of tumor progression. In vitro promotes cell viability in melanoma cell lines. Antigen recognized on a melanoma by autologous cytolytic T-lymphocytes. The sequence is that of Melanoma-associated antigen 3 from Homo sapiens (Human).